The chain runs to 173 residues: Shikimate kinase (173 aa).

Residue 14–19 (GAGKST) participates in ATP binding. Ser-18 lines the Mg(2+) pocket. The substrate site is built by Asp-36, Arg-60, and Gly-82. An ATP-binding site is contributed by Arg-120. Position 140 (Arg-140) interacts with substrate. Gln-157 is an ATP binding site.

It belongs to the shikimate kinase family. As to quaternary structure, monomer. Requires Mg(2+) as cofactor.

The protein resides in the cytoplasm. It carries out the reaction shikimate + ATP = 3-phosphoshikimate + ADP + H(+). The protein operates within metabolic intermediate biosynthesis; chorismate biosynthesis; chorismate from D-erythrose 4-phosphate and phosphoenolpyruvate: step 5/7. In terms of biological role, catalyzes the specific phosphorylation of the 3-hydroxyl group of shikimic acid using ATP as a cosubstrate. This Buchnera aphidicola subsp. Acyrthosiphon pisum (strain APS) (Acyrthosiphon pisum symbiotic bacterium) protein is Shikimate kinase.